Reading from the N-terminus, the 147-residue chain is UPF0306 protein YhbP (147 aa).

This sequence belongs to the UPF0306 family.

The chain is UPF0306 protein YhbP from Salmonella schwarzengrund (strain CVM19633).